The following is a 274-amino-acid chain: Nitrogenase iron protein (274 aa).

Position 8 to 15 (8 to 15 (GKGGIGKS)) interacts with ATP. Residue Cys94 participates in [4Fe-4S] cluster binding. Residue Arg97 is modified to ADP-ribosylarginine; by dinitrogenase reductase ADP-ribosyltransferase. Cys129 is a [4Fe-4S] cluster binding site.

Belongs to the NifH/BchL/ChlL family. Homodimer. The cofactor is [4Fe-4S] cluster. In terms of processing, the reversible ADP-ribosylation of Arg-97 inactivates the nitrogenase reductase and regulates nitrogenase activity.

It catalyses the reaction N2 + 8 reduced [2Fe-2S]-[ferredoxin] + 16 ATP + 16 H2O = H2 + 8 oxidized [2Fe-2S]-[ferredoxin] + 2 NH4(+) + 16 ADP + 16 phosphate + 6 H(+). In terms of biological role, the key enzymatic reactions in nitrogen fixation are catalyzed by the nitrogenase complex, which has 2 components: the iron protein and the molybdenum-iron protein. The sequence is that of Nitrogenase iron protein from Methanocella arvoryzae (strain DSM 22066 / NBRC 105507 / MRE50).